We begin with the raw amino-acid sequence, 1193 residues long: Protogenin (1193 aa).

The N-terminal stretch at 1–23 is a signal peptide; it reads MAPPVRPGMLPLLLLLLLPPLGS. 4 Ig-like domains span residues 24 to 124, 126 to 217, 230 to 317, and 322 to 406; these read VPGV…AHLT, STIS…ASLT, PTII…ATLT, and PSFV…ARLT. Over 24-944 the chain is Extracellular; the sequence is VPGVWSFSEL…YYHLDQKSMT (921 aa). 2 disulfide bridges follow: C54–C107 and C150–C200. N-linked (GlcNAc...) asparagine glycosylation is present at N84. Residue N238 is glycosylated (N-linked (GlcNAc...) asparagine). Cystine bridges form between C251–C299 and C343–C390. Fibronectin type-III domains lie at 416-510, 512-608, 613-712, 719-812, and 817-912; these read APYN…TLED, PLRP…TPKA, APKS…VRDR, PPHH…TLPE, and PPVG…VLPK. N625 is a glycosylation site (N-linked (GlcNAc...) asparagine). A helical transmembrane segment spans residues 945-965; sequence GIAVGVGIALTCILICVLILI. Over 966-1193 the chain is Cytoplasmic; sequence YRSKARKSSA…LRHAAESVPV (228 aa). 2 disordered regions span residues 974-1018 and 1078-1193; these read SASK…PMMP and VLIS…SVPV. Polar residues-rich tracts occupy residues 978–990 and 1086–1095; these read TTQS…SRAS and PSSPGQTTSF. The segment covering 1105–1133 has biased composition (basic and acidic residues); that stretch reads DTEHSANSEGSHETGDSGRFSHESNDEIH. Residues 1136 to 1150 show a composition bias toward polar residues; the sequence is SVISSTPPTSNSLTC.

This sequence belongs to the immunoglobulin superfamily. DCC family.

The protein resides in the membrane. Its function is as follows. May play a role in anteroposterior axis elongation. This chain is Protogenin, found in Rattus norvegicus (Rat).